We begin with the raw amino-acid sequence, 1382 residues long: Insulin receptor (1382 aa).

The signal sequence occupies residues 1-27; that stretch reads MATGGRRGAAAAPLLVAVAALLLGAAG. Extracellular-side segments run 28–758 and 763–956; these read HLYP…PRPS and SLGD…NIAK. Cysteines 35 and 53 form a disulfide. N-linked (GlcNAc...) asparagine glycans are attached at residues N43, N52, N105, and N138. Cystine bridges form between C153–C182, C186–C209, C196–C215, C219–C228, C223–C234, C235–C243, C239–C252, C255–C264, and C268–C280. N242 carries an N-linked (GlcNAc...) asparagine glycan. N282 is a glycosylation site (N-linked (GlcNAc...) asparagine). 5 disulfides stabilise this stretch: C286–C311, C293–C301, C315–C328, C331–C335, and C339–C360. An N-linked (GlcNAc...) asparagine glycan is attached at N322. Residue N364 is glycosylated (N-linked (GlcNAc...) asparagine). S400 carries the phosphoserine modification. Y401 bears the Phosphotyrosine mark. Position 407 is a phosphoserine (S407). 2 N-linked (GlcNAc...) asparagine glycosylation sites follow: N424 and N445. C462 and C495 are oxidised to a cystine. 4 N-linked (GlcNAc...) asparagine glycosylation sites follow: N541, N633, N651, and N698. Residues 624-726 form the Fibronectin type-III 1 domain; that stretch reads VPLDPISVSN…SQILKELEES (103 aa). Disulfide bonds link C674-C899 and C825-C834. A disordered region spans residues 686-708; sequence SPPFESEDSQKHNQSEYEDSAGE. The insulin-binding stretch occupies residues 733 to 741; that stretch reads EDYLHNVVF. Residues 746–766 form a disordered region; that stretch reads TSSGTGAEDPRPSRKRRSLGD. 2 consecutive Fibronectin type-III domains span residues 757 to 842 and 853 to 947; these read PSRK…YVSA and IVGP…VTDY. N-linked (GlcNAc...) asparagine glycosylation is found at N769 and N782. N-linked (GlcNAc...) asparagine glycosylation is found at N920 and N933. A helical membrane pass occupies residues 957-979; sequence IIIGPLIFVFLFSVVIGSIYLFL. Residues 980–1382 are Cytoplasmic-facing; sequence RKRQPDGPLG…ILTLPRSNPS (403 aa). Y992, Y999, and Y1011 each carry phosphotyrosine; by autocatalysis. Position 999 (Y999) is a region of interest, important for interaction with IRS1, SHC1 and STAT5B. Positions 1023–1298 constitute a Protein kinase domain; the sequence is ITLLRELGQG…LLKDDLHPSF (276 aa). ATP-binding residues include S1033 and K1057. K1079 is covalently cross-linked (Glycyl lysine isopeptide (Lys-Gly) (interchain with G-Cter in ubiquitin)). Position 1083 is an S-nitrosocysteine (C1083). Position 1104–1110 (1104–1110) interacts with ATP; sequence ELMAHGD. The active-site Proton donor/acceptor is the D1159. ATP contacts are provided by residues 1163–1164 and D1177; that span reads RN. Residues Y1185, Y1189, Y1190, Y1355, and Y1361 each carry the phosphotyrosine; by autocatalysis modification. Residues 1360-1382 are disordered; the sequence is PYTHMNGGKKNGRILTLPRSNPS. Residues 1361 to 1364 form a PIK3R1-binding region; the sequence is YTHM.

This sequence belongs to the protein kinase superfamily. Tyr protein kinase family. Insulin receptor subfamily. Tetramer of 2 alpha and 2 beta chains linked by disulfide bonds. The alpha chains carry the insulin-binding regions, while the beta chains carry the kinase domain. Forms a hybrid receptor with IGF1R, the hybrid is a tetramer consisting of 1 alpha chain and 1 beta chain of INSR and 1 alpha chain and 1 beta chain of IGF1R. Interacts with SORBS1 but dissociates from it following insulin stimulation. Binds SH2B2. Activated form of INSR interacts (via Tyr-999) with the PTB/PID domains of IRS1 and SHC1. The sequences surrounding the phosphorylated NPXY motif contribute differentially to either IRS1 or SHC1 recognition. Interacts (via tyrosines in the C-terminus) with IRS2 (via PTB domain and 591-786 AA); the 591-786 would be the primary anchor of IRS2 to INSR while the PTB domain would have a stabilizing action on the interaction with INSR. Interacts with the SH2 domains of the 85 kDa regulatory subunit of PI3K (PIK3R1) in vitro, when autophosphorylated on tyrosine residues. Interacts with SOCS7. Interacts (via the phosphorylated Tyr-999), with SOCS3. Interacts (via the phosphorylated Tyr-1185, Tyr-1189, Tyr-1190) with SOCS1. Interacts with CAV2 (tyrosine-phosphorylated form); the interaction is increased with 'Tyr-27'phosphorylation of CAV2. Interacts with ARRB2. Interacts with GRB10; this interaction blocks the association between IRS1/IRS2 and INSR, significantly reduces insulin-stimulated tyrosine phosphorylation of IRS1 and IRS2 and thus decreases insulin signaling. Interacts with GRB7. Interacts with PDPK1. Interacts (via Tyr-1190) with GRB14 (via BPS domain); this interaction protects the tyrosines in the activation loop from dephosphorylation, but promotes dephosphorylation of Tyr-999, this results in decreased interaction with, and phosphorylation of, IRS1. Interacts (via subunit alpha) with ENPP1 (via 485-599 AA); this interaction blocks autophosphorylation. Interacts with PTPRE; this interaction is dependent of Tyr-1185, Tyr-1189 and Tyr-1190 of the INSR. Interacts with STAT5B (via SH2 domain). Interacts with PTPRF. Interacts with ATIC; ATIC together with PRKAA2/AMPK2 and HACD3/PTPLAD1 is proposed to be part of a signaling netwok regulating INSR autophosphorylation and endocytosis. Interacts with the cone snail venom insulin Con-Ins G1. Interacts with the insulin receptor SORL1; this interaction strongly increases its surface exposure, hence strengthens insulin signal reception. Interacts (tyrosine phosphorylated) with CCDC88A/GIV (via SH2-like region); binding requires autophosphorylation of the INSR C-terminal region. Interacts with GNAI3; the interaction is probably mediated by CCDC88A/GIV. Interacts with LMBRD1. Interacts (in response to insulin stimulation) with NCK1; this interaction may recruit PTPN1 to mediate INSR dephosphorylation. Interacts with CD248; this interaction diminishes INSR autophosphorylation. In terms of processing, after being transported from the endoplasmic reticulum to the Golgi apparatus, the single glycosylated precursor is further glycosylated and then cleaved, followed by its transport to the plasma membrane. Post-translationally, autophosphorylated on tyrosine residues in response to insulin. Phosphorylation of Tyr-999 is required for binding to IRS1, SHC1 and STAT5B. Dephosphorylated by PTPRE at Tyr-999, Tyr-1185, Tyr-1189 and Tyr-1190. May also be phosphorylated at Tyr-1185 and Tyr-1190 by mTORC2. Dephosphorylated by PTPRF and PTPN1. Dephosphorylated by PTPN2; down-regulates insulin-induced signaling. Dephosphorylation at Tyr-1189 and Tyr-1190 requires the SH2/SH3 adapter protein NCK1, probably to recruit its interaction partner PTPN1. S-nitrosylation at Cys-1083 by BLVRB inhibits the receptor tyrosine kinase, thereby inhibiting insulin signaling. In terms of processing, ubiquitinated by MARCHF1; leading to degradation thereby reducing surface INSR expression. As to expression, isoform Long and isoform Short are predominantly expressed in tissue targets of insulin metabolic effects: liver, adipose tissue and skeletal muscle but are also expressed in the peripheral nerve, kidney, pulmonary alveoli, pancreatic acini, placenta vascular endothelium, fibroblasts, monocytes, granulocytes, erythrocytes and skin. Isoform Short is preferentially expressed in fetal cells such as fetal fibroblasts, muscle, liver and kidney. Found as a hybrid receptor with IGF1R in muscle, heart, kidney, adipose tissue, skeletal muscle, hepatoma, fibroblasts, spleen and placenta (at protein level). Overexpressed in several tumors, including breast, colon, lung, ovary, and thyroid carcinomas.

The protein resides in the cell membrane. It is found in the late endosome. The protein localises to the lysosome. The enzyme catalyses L-tyrosyl-[protein] + ATP = O-phospho-L-tyrosyl-[protein] + ADP + H(+). With respect to regulation, activated in response to insulin. Autophosphorylation activates the kinase activity. PTPN1, PTPRE and PTPRF dephosphorylate important tyrosine residues, thereby reducing INSR activity. Inhibited by ENPP1. GRB10 and GRB14 inhibit the catalytic activity of the INSR, they block access of substrates to the activated receptor. SOCS1 and SOCS3 act as negative regulators of INSR activity, they bind to the activated INRS and interfere with the phosphorylation of INSR substrates. Functionally, receptor tyrosine kinase which mediates the pleiotropic actions of insulin. Binding of insulin leads to phosphorylation of several intracellular substrates, including, insulin receptor substrates (IRS1, 2, 3, 4), SHC, GAB1, CBL and other signaling intermediates. Each of these phosphorylated proteins serve as docking proteins for other signaling proteins that contain Src-homology-2 domains (SH2 domain) that specifically recognize different phosphotyrosine residues, including the p85 regulatory subunit of PI3K and SHP2. Phosphorylation of IRSs proteins lead to the activation of two main signaling pathways: the PI3K-AKT/PKB pathway, which is responsible for most of the metabolic actions of insulin, and the Ras-MAPK pathway, which regulates expression of some genes and cooperates with the PI3K pathway to control cell growth and differentiation. Binding of the SH2 domains of PI3K to phosphotyrosines on IRS1 leads to the activation of PI3K and the generation of phosphatidylinositol-(3, 4, 5)-triphosphate (PIP3), a lipid second messenger, which activates several PIP3-dependent serine/threonine kinases, such as PDPK1 and subsequently AKT/PKB. The net effect of this pathway is to produce a translocation of the glucose transporter SLC2A4/GLUT4 from cytoplasmic vesicles to the cell membrane to facilitate glucose transport. Moreover, upon insulin stimulation, activated AKT/PKB is responsible for: anti-apoptotic effect of insulin by inducing phosphorylation of BAD; regulates the expression of gluconeogenic and lipogenic enzymes by controlling the activity of the winged helix or forkhead (FOX) class of transcription factors. Another pathway regulated by PI3K-AKT/PKB activation is mTORC1 signaling pathway which regulates cell growth and metabolism and integrates signals from insulin. AKT mediates insulin-stimulated protein synthesis by phosphorylating TSC2 thereby activating mTORC1 pathway. The Ras/RAF/MAP2K/MAPK pathway is mainly involved in mediating cell growth, survival and cellular differentiation of insulin. Phosphorylated IRS1 recruits GRB2/SOS complex, which triggers the activation of the Ras/RAF/MAP2K/MAPK pathway. In addition to binding insulin, the insulin receptor can bind insulin-like growth factors (IGFI and IGFII). Isoform Short has a higher affinity for IGFII binding. When present in a hybrid receptor with IGF1R, binds IGF1. PubMed:12138094 shows that hybrid receptors composed of IGF1R and INSR isoform Long are activated with a high affinity by IGF1, with low affinity by IGF2 and not significantly activated by insulin, and that hybrid receptors composed of IGF1R and INSR isoform Short are activated by IGF1, IGF2 and insulin. In contrast, PubMed:16831875 shows that hybrid receptors composed of IGF1R and INSR isoform Long and hybrid receptors composed of IGF1R and INSR isoform Short have similar binding characteristics, both bind IGF1 and have a low affinity for insulin. In adipocytes, inhibits lipolysis. This chain is Insulin receptor (INSR), found in Homo sapiens (Human).